We begin with the raw amino-acid sequence, 243 residues long: Ubiquinone/menaquinone biosynthesis C-methyltransferase UbiE (243 aa).

Residues threonine 69, aspartate 90, and 116–117 (DA) each bind S-adenosyl-L-methionine.

It belongs to the class I-like SAM-binding methyltransferase superfamily. MenG/UbiE family.

The catalysed reaction is a 2-demethylmenaquinol + S-adenosyl-L-methionine = a menaquinol + S-adenosyl-L-homocysteine + H(+). The enzyme catalyses a 2-methoxy-6-(all-trans-polyprenyl)benzene-1,4-diol + S-adenosyl-L-methionine = a 5-methoxy-2-methyl-3-(all-trans-polyprenyl)benzene-1,4-diol + S-adenosyl-L-homocysteine + H(+). Its pathway is quinol/quinone metabolism; menaquinone biosynthesis; menaquinol from 1,4-dihydroxy-2-naphthoate: step 2/2. It functions in the pathway cofactor biosynthesis; ubiquinone biosynthesis. Methyltransferase required for the conversion of demethylmenaquinol (DMKH2) to menaquinol (MKH2) and the conversion of 2-polyprenyl-6-methoxy-1,4-benzoquinol (DDMQH2) to 2-polyprenyl-3-methyl-6-methoxy-1,4-benzoquinol (DMQH2). This is Ubiquinone/menaquinone biosynthesis C-methyltransferase UbiE from Burkholderia vietnamiensis (strain G4 / LMG 22486) (Burkholderia cepacia (strain R1808)).